Consider the following 274-residue polypeptide: Nitrogenase iron protein (274 aa).

An ATP-binding site is contributed by 8–15 (GKGGIGKS). C94 provides a ligand contact to [4Fe-4S] cluster. R97 is modified (ADP-ribosylarginine; by dinitrogenase reductase ADP-ribosyltransferase). C131 contacts [4Fe-4S] cluster.

The protein belongs to the NifH/BchL/ChlL family. As to quaternary structure, homodimer. Requires [4Fe-4S] cluster as cofactor. In terms of processing, the reversible ADP-ribosylation of Arg-97 inactivates the nitrogenase reductase and regulates nitrogenase activity.

The enzyme catalyses N2 + 8 reduced [2Fe-2S]-[ferredoxin] + 16 ATP + 16 H2O = H2 + 8 oxidized [2Fe-2S]-[ferredoxin] + 2 NH4(+) + 16 ADP + 16 phosphate + 6 H(+). In terms of biological role, the key enzymatic reactions in nitrogen fixation are catalyzed by the nitrogenase complex, which has 2 components: the iron protein and the molybdenum-iron protein. This Chlorobaculum parvum (strain DSM 263 / NCIMB 8327) (Chlorobium vibrioforme subsp. thiosulfatophilum) protein is Nitrogenase iron protein.